The following is a 1231-amino-acid chain: STE20-like serine/threonine-protein kinase (1231 aa).

S14 bears the Phosphoserine mark. The region spanning 34 to 292 is the Protein kinase domain; the sequence is WETIGELGDG…TSQLLQHPFV (259 aa). Residues 40-48 and K63 contribute to the ATP site; that span reads LGDGAFGKV. Catalysis depends on D155, which acts as the Proton acceptor. T183 is modified (phosphothreonine). Phosphoserine is present on S189. The segment at 309-351 is disordered; sequence AEVTEEVEDGKEEDDDEEIENSLPIPTNKRASSDLSIASSEED. A compositionally biased stretch (acidic residues) spans 312–328; it reads TEEVEDGKEEDDDEEIE. Phosphoserine occurs at positions 330, 340, 341, 344, 347, 348, 354, and 372. Polar residues predominate over residues 337–347; sequence KRASSDLSIAS. Residues 405–478 form a disordered region; sequence PDRATELPES…KQPVLENKLV (74 aa). Composition is skewed to basic and acidic residues over residues 407-428 and 446-478; these read RATELPESGREEKRPKLDRLPD and DHAVTSETNIEHNLKPEKERDQEKQPVLENKLV. The residue at position 507 (S507) is a Phosphoserine. A compositionally biased stretch (basic and acidic residues) spans 516-531; it reads THEKLRKDDTTQKDVI. The interval 516-757 is disordered; it reads THEKLRKDDT…TGSTADNSSI (242 aa). 2 positions are modified to phosphoserine: S536 and S554. Over residues 601–613 the composition is skewed to basic and acidic residues; it reads TDQKLVENTHEKQ. A compositionally biased stretch (polar residues) spans 615–624; sequence PISSETTLDT. 2 positions are modified to phosphoserine: S641 and S661. A compositionally biased stretch (acidic residues) spans 641–660; sequence STEEVEVEGAVSETDEEDVQ. Positions 683–692 are enriched in low complexity; it reads EAPAQVEVQV. Positions 693–706 are enriched in pro residues; the sequence is PVPPQPSEPPPAPI. S775 carries the phosphoserine modification. Residue T810 is modified to Phosphothreonine. S814 carries the post-translational modification Phosphoserine. A coiled-coil region spans residues 822–1065; it reads LRRQELRELR…LKNRQTQERA (244 aa). Residues 871–906 form the UVR domain; sequence DQEIENLEKQQKQTIERLEQEHTNRLRDEAKRIKGE. T1093 carries the post-translational modification Phosphothreonine. The stretch at 1105–1179 forms a coiled coil; sequence SAQEEKRQKN…ELKEWREKLR (75 aa).

This sequence belongs to the protein kinase superfamily. STE Ser/Thr protein kinase family. STE20 subfamily. Proteolytically cleaved by caspase-3. Post-translationally, autophosphorylated. In terms of tissue distribution, ubiquitously expressed.

The protein resides in the cytoplasm. The catalysed reaction is L-seryl-[protein] + ATP = O-phospho-L-seryl-[protein] + ADP + H(+). It catalyses the reaction L-threonyl-[protein] + ATP = O-phospho-L-threonyl-[protein] + ADP + H(+). Mediates apoptosis and actin stress fiber dissolution. In Cavia porcellus (Guinea pig), this protein is STE20-like serine/threonine-protein kinase (SLK).